Reading from the N-terminus, the 73-residue chain is Sec-independent protein translocase protein TatA (73 aa).

A helical transmembrane segment spans residues 1 to 21 (MFGLGAPELILILILALIIFG). Positions 52 to 73 (EAAKIDDGNNNSDKEKATRQAS) are disordered.

The protein belongs to the TatA/E family. As to quaternary structure, forms a complex with TatC.

The protein localises to the cell membrane. Functionally, part of the twin-arginine translocation (Tat) system that transports large folded proteins containing a characteristic twin-arginine motif in their signal peptide across membranes. TatA could form the protein-conducting channel of the Tat system. The chain is Sec-independent protein translocase protein TatA from Moorella thermoacetica (strain ATCC 39073 / JCM 9320).